The sequence spans 549 residues: Glucose-6-phosphate isomerase (549 aa).

An N6-acetyllysine mark is found at Lys-80, Lys-228, and Lys-234. Glu-355 (proton donor) is an active-site residue. Residues His-386 and Lys-514 contribute to the active site.

It belongs to the GPI family.

It is found in the cytoplasm. It carries out the reaction alpha-D-glucose 6-phosphate = beta-D-fructose 6-phosphate. The protein operates within carbohydrate biosynthesis; gluconeogenesis. It participates in carbohydrate degradation; glycolysis; D-glyceraldehyde 3-phosphate and glycerone phosphate from D-glucose: step 2/4. Catalyzes the reversible isomerization of glucose-6-phosphate to fructose-6-phosphate. The protein is Glucose-6-phosphate isomerase of Escherichia coli O139:H28 (strain E24377A / ETEC).